The sequence spans 421 residues: Imidazolonepropionase (421 aa).

Residues histidine 81 and histidine 83 each contribute to the Fe(3+) site. Zn(2+)-binding residues include histidine 81 and histidine 83. Arginine 90, tyrosine 153, and histidine 186 together coordinate 4-imidazolone-5-propanoate. Residue tyrosine 153 coordinates N-formimidoyl-L-glutamate. Histidine 251 lines the Fe(3+) pocket. A Zn(2+)-binding site is contributed by histidine 251. Glutamate 254 serves as a coordination point for 4-imidazolone-5-propanoate. Aspartate 326 lines the Fe(3+) pocket. A Zn(2+)-binding site is contributed by aspartate 326. N-formimidoyl-L-glutamate is bound by residues asparagine 328 and glycine 330. A 4-imidazolone-5-propanoate-binding site is contributed by serine 331.

Belongs to the metallo-dependent hydrolases superfamily. HutI family. The cofactor is Zn(2+). Fe(3+) serves as cofactor.

It localises to the cytoplasm. It carries out the reaction 4-imidazolone-5-propanoate + H2O = N-formimidoyl-L-glutamate. It functions in the pathway amino-acid degradation; L-histidine degradation into L-glutamate; N-formimidoyl-L-glutamate from L-histidine: step 3/3. In terms of biological role, catalyzes the hydrolytic cleavage of the carbon-nitrogen bond in imidazolone-5-propanoate to yield N-formimidoyl-L-glutamate. It is the third step in the universal histidine degradation pathway. The sequence is that of Imidazolonepropionase from Streptococcus sanguinis (strain SK36).